A 357-amino-acid polypeptide reads, in one-letter code: tRNA-specific 2-thiouridylase MnmA (357 aa).

ATP is bound by residues 10–17 and I36; that span reads GISGGVDS. C98 (nucleophile) is an active-site residue. C98 and C194 are disulfide-bonded. G122 lines the ATP pocket. The interaction with tRNA stretch occupies residues 144 to 146; the sequence is KDQ. C194 (cysteine persulfide intermediate) is an active-site residue. The tract at residues 303 to 304 is interaction with tRNA; sequence RY.

It belongs to the MnmA/TRMU family.

It is found in the cytoplasm. It carries out the reaction S-sulfanyl-L-cysteinyl-[protein] + uridine(34) in tRNA + AH2 + ATP = 2-thiouridine(34) in tRNA + L-cysteinyl-[protein] + A + AMP + diphosphate + H(+). Its function is as follows. Catalyzes the 2-thiolation of uridine at the wobble position (U34) of tRNA, leading to the formation of s(2)U34. In Chlorobium phaeovibrioides (strain DSM 265 / 1930) (Prosthecochloris vibrioformis (strain DSM 265)), this protein is tRNA-specific 2-thiouridylase MnmA.